The sequence spans 688 residues: Polyphosphate kinase (688 aa).

Asparagine 45 is a binding site for ATP. Mg(2+) is bound by residues arginine 375 and arginine 405. Residues 430 to 464 form the PLD phosphodiesterase domain; sequence PGLKIHAKLFLISRKENGEVVRYAHIGTGNFNEKT. Histidine 435 (phosphohistidine intermediate) is an active-site residue. The ATP site is built by tyrosine 468, arginine 564, and histidine 592.

Belongs to the polyphosphate kinase 1 (PPK1) family. Requires Mg(2+) as cofactor. Post-translationally, an intermediate of this reaction is the autophosphorylated ppk in which a phosphate is covalently linked to a histidine residue through a N-P bond.

It carries out the reaction [phosphate](n) + ATP = [phosphate](n+1) + ADP. In terms of biological role, catalyzes the reversible transfer of the terminal phosphate of ATP to form a long-chain polyphosphate (polyP). The chain is Polyphosphate kinase from Escherichia coli O157:H7.